The chain runs to 424 residues: Enolase (424 aa).

Residue Gln162 participates in (2R)-2-phosphoglycerate binding. The active-site Proton donor is Glu204. Mg(2+) is bound by residues Asp241, Glu284, and Asp311. (2R)-2-phosphoglycerate is bound by residues Lys336, Arg365, Ser366, and Lys387. Lys336 acts as the Proton acceptor in catalysis.

It belongs to the enolase family. Requires Mg(2+) as cofactor.

Its subcellular location is the cytoplasm. The protein resides in the secreted. It localises to the cell surface. It catalyses the reaction (2R)-2-phosphoglycerate = phosphoenolpyruvate + H2O. Its pathway is carbohydrate degradation; glycolysis; pyruvate from D-glyceraldehyde 3-phosphate: step 4/5. Its function is as follows. Catalyzes the reversible conversion of 2-phosphoglycerate (2-PG) into phosphoenolpyruvate (PEP). It is essential for the degradation of carbohydrates via glycolysis. The protein is Enolase of Agrobacterium fabrum (strain C58 / ATCC 33970) (Agrobacterium tumefaciens (strain C58)).